A 353-amino-acid polypeptide reads, in one-letter code: GDSL esterase/lipase At5g03810 (353 aa).

The first 24 residues, 1-24 (MKMFITMSMCLSVIACFYAGVGTG), serve as a signal peptide directing secretion. The active-site Nucleophile is the S37. N-linked (GlcNAc...) asparagine glycans are attached at residues N100, N255, N256, N260, and N320. Catalysis depends on residues D328 and H331.

Belongs to the 'GDSL' lipolytic enzyme family.

The protein localises to the secreted. This Arabidopsis thaliana (Mouse-ear cress) protein is GDSL esterase/lipase At5g03810.